Reading from the N-terminus, the 910-residue chain is Protein translocase subunit SecA (910 aa).

Residues glutamine 89, 107–111 (GEGKT), and aspartate 502 each bind ATP. Zn(2+) contacts are provided by cysteine 894, cysteine 896, cysteine 905, and histidine 906.

It belongs to the SecA family. Monomer and homodimer. Part of the essential Sec protein translocation apparatus which comprises SecA, SecYEG and auxiliary proteins SecDF-YajC and YidC. It depends on Zn(2+) as a cofactor.

Its subcellular location is the cell inner membrane. It is found in the cytoplasm. It carries out the reaction ATP + H2O + cellular proteinSide 1 = ADP + phosphate + cellular proteinSide 2.. Functionally, part of the Sec protein translocase complex. Interacts with the SecYEG preprotein conducting channel. Has a central role in coupling the hydrolysis of ATP to the transfer of proteins into and across the cell membrane, serving both as a receptor for the preprotein-SecB complex and as an ATP-driven molecular motor driving the stepwise translocation of polypeptide chains across the membrane. The polypeptide is Protein translocase subunit SecA (Chelativorans sp. (strain BNC1)).